A 1181-amino-acid chain; its full sequence is Integrin alpha-7 (1181 aa).

A signal peptide spans 1 to 33 (MAGARSRDPWGASGICYLFGSLLVELLFSRAVA). Residues 34-1082 (FNLDVMGALR…MAVVAEGVPW (1049 aa)) lie on the Extracellular side of the membrane. 7 FG-GAP repeats span residues 35–103 (NLDV…ETDC), 110–175 (QGAD…IRDE), 185–238 (EGRP…SADL), 292–349 (DRLP…ASRL), 350–411 (VPEV…HWAG), 412–467 (ISPL…GVVA), and 471–530 (QVLE…IAPR). N-linked (GlcNAc...) asparagine glycosylation occurs at Asn-86. 3 disulfides stabilise this stretch: Cys-94–Cys-103, Cys-140–Cys-163, and Cys-184–Cys-197. Residues Asp-372, Asn-374, Asp-376, Asp-380, Asp-434, Asn-436, Asp-438, Asp-442, Asp-492, Asp-494, Asn-496, Tyr-498, and Asp-500 each coordinate Ca(2+). Cystine bridges form between Cys-539–Cys-546, Cys-552–Cys-615, Cys-681–Cys-687, Cys-781–Cys-792, Cys-939–Cys-994, and Cys-1001–Cys-1006. Residue Asn-786 is glycosylated (N-linked (GlcNAc...) asparagine). Residues 950 to 961 (VDSRDRRRRELE) are compositionally biased toward basic and acidic residues. A disordered region spans residues 950–978 (VDSRDRRRRELEPPEQQEPGERQEPSMSW). N-linked (GlcNAc...) asparagine glycosylation is present at Asn-989. 2 N-linked (GlcNAc...) asparagine glycosylation sites follow: Asn-1025 and Asn-1045. The chain crosses the membrane as a helical span at residues 1083 to 1103 (WVILLAVLAGLLVLALLVLLL). At 1104 to 1181 (WKMGFFKRAK…PDGHPGPGTA (78 aa)) the chain is on the cytoplasmic side. A GFFKR motif motif is present at residues 1107–1111 (GFFKR). The interval 1138 to 1181 (EKTGTILRNNWGSPRREGPDAHPILAADGHPELGPDGHPGPGTA) is disordered. Tandem repeats lie at residues 1157 to 1160 (DAHP), 1165 to 1168 (DGHP), and 1173 to 1176 (DGHP). A 3 X 4 AA repeats of D-X-H-P region spans residues 1157 to 1176 (DAHPILAADGHPELGPDGHP).

The protein belongs to the integrin alpha chain family. As to quaternary structure, heterodimer of an alpha and a beta subunit. The alpha subunit is composed of a heavy and a light chain linked by a disulfide bond. Alpha-7 associates with beta-1. Interacts with COMP. Interacts (via C-terminus intracellular tail region) with CIB1; the interaction is stabilized/increased in a calcium- and magnesium-dependent manner. ADP-ribosylated on at least two sites of the extracellular domain in skeletal myotubes. In terms of processing, a 70 kDa form is created by proteolytic cleavage. Cleavage is elevated during myogenic differentiation and the cleaved form enhances cell adhesion and spreading on laminin. As to expression, isoforms containing segment A are predominantly expressed in skeletal muscle. Isoforms containing segment B are abundantly expressed in skeletal muscle, moderately in cardiac muscle, small intestine, colon, ovary and prostate and weakly in lung and testes. Isoforms containing segment X2D are expressed at low levels in fetal and adult skeletal muscle and in cardiac muscle, but are not detected in myoblasts and myotubes. In muscle fibers isoforms containing segment A and B are expressed at myotendinous and neuromuscular junctions; isoforms containing segment C are expressed at neuromuscular junctions and at extrasynaptic sites. Isoforms containing segments X1 or X2 or, at low levels, X1X2 are expressed in fetal and adult skeletal muscle (myoblasts and myotubes) and cardiac muscle.

It localises to the membrane. Integrin alpha-7/beta-1 is the primary laminin receptor on skeletal myoblasts and adult myofibers. During myogenic differentiation, it may induce changes in the shape and mobility of myoblasts, and facilitate their localization at laminin-rich sites of secondary fiber formation. It is involved in the maintenance of the myofibers cytoarchitecture as well as for their anchorage, viability and functional integrity. Isoform Alpha-7X2B and isoform Alpha-7X1B promote myoblast migration on laminin 1 and laminin 2/4, but isoform Alpha-7X1B is less active on laminin 1 (In vitro). Acts as a Schwann cell receptor for laminin-2. Acts as a receptor of COMP and mediates its effect on vascular smooth muscle cells (VSMCs) maturation. Required to promote contractile phenotype acquisition in differentiated airway smooth muscle (ASM) cells. This chain is Integrin alpha-7 (ITGA7), found in Homo sapiens (Human).